Consider the following 93-residue polypeptide: Sec-independent protein translocase protein TatA (93 aa).

A helical membrane pass occupies residues 1–21 (MGAMSPWHWAIVALVVVILFG). The tract at residues 44 to 93 (KEMQNDNSTPAPTAQQSAPAELPVADTTTAPVTPPAPVQPQPQHTEPKSA) is disordered. Low complexity predominate over residues 51-74 (STPAPTAQQSAPAELPVADTTTAP).

Belongs to the TatA/E family. In terms of assembly, the Tat system comprises two distinct complexes: a TatABC complex, containing multiple copies of TatA, TatB and TatC subunits, and a separate TatA complex, containing only TatA subunits. Substrates initially bind to the TatABC complex, which probably triggers association of the separate TatA complex to form the active translocon.

It localises to the cell membrane. Functionally, part of the twin-arginine translocation (Tat) system that transports large folded proteins containing a characteristic twin-arginine motif in their signal peptide across membranes. TatA could form the protein-conducting channel of the Tat system. This Rhodococcus opacus (strain B4) protein is Sec-independent protein translocase protein TatA.